The following is a 285-amino-acid chain: Ribosomal RNA small subunit methyltransferase A (285 aa).

Positions 29, 31, 56, 77, 102, and 123 each coordinate S-adenosyl-L-methionine.

Belongs to the class I-like SAM-binding methyltransferase superfamily. rRNA adenine N(6)-methyltransferase family. RsmA subfamily.

The protein resides in the cytoplasm. The catalysed reaction is adenosine(1518)/adenosine(1519) in 16S rRNA + 4 S-adenosyl-L-methionine = N(6)-dimethyladenosine(1518)/N(6)-dimethyladenosine(1519) in 16S rRNA + 4 S-adenosyl-L-homocysteine + 4 H(+). Functionally, specifically dimethylates two adjacent adenosines (A1518 and A1519) in the loop of a conserved hairpin near the 3'-end of 16S rRNA in the 30S particle. May play a critical role in biogenesis of 30S subunits. This chain is Ribosomal RNA small subunit methyltransferase A, found in Clostridium perfringens (strain ATCC 13124 / DSM 756 / JCM 1290 / NCIMB 6125 / NCTC 8237 / Type A).